The following is a 157-amino-acid chain: Putative pre-16S rRNA nuclease (157 aa).

The protein belongs to the YqgF nuclease family.

It localises to the cytoplasm. Its function is as follows. Could be a nuclease involved in processing of the 5'-end of pre-16S rRNA. This chain is Putative pre-16S rRNA nuclease, found in Parasynechococcus marenigrum (strain WH8102).